Reading from the N-terminus, the 30-residue chain is Methanobactin mb-OB3b (30 aa).

Residues 1-19 constitute a propeptide that is removed on maturation; sequence MTVKIAQKKVLPVIGRAAA. The segment at residues 20–21 is a cross-link (2-(3-methylbutanoyl)-5-hydroxyoxazole-4-carbothionic acid (Leu-Cys)); the sequence is LC. Cu(2+) is bound by residues cysteine 21 and cysteine 27. Cysteines 24 and 29 form a disulfide. A cross-link (proline 5-hydroxy-oxazole-4-carbothionic acid (Pro-Cys)) is located at residues 26–27; sequence PC.

Monomer. In the absence of copper, may exist as a dimer or an oligomer.

The protein localises to the secreted. It localises to the cytoplasm. It catalyses the reaction 2 superoxide + 2 H(+) = H2O2 + O2. In terms of biological role, chalkophore involved in scavenging, uptake and suppression of toxicity of copper. Each apo-methanobactin (apo-mb) complexes 1 Cu(2+) or Cu(1+) ion to form Cu(1+)-mb (Cu-mb) which is then taken up by the cell. Enhances growth rate in the presence of copper and reduces growth lag upon exposition to elevated levels of copper. Cu-mb contributes to the switchover from soluble methane monooxygenase (sMMO) to the membrane-bound particulate MMO (pMMO) by inducing transcription of pMMO subunit A. It also stimulates the enzymatic activity of pMMO. In the absence of copper, binds other metal ions, like Zn(2+), Ag(1+), Au(3+), Co(2+), Cd(2+), Fe(3+), Hg(2+), Mn(2+), Ni(2+), Pb(2+) or U(6+), but not Ba(2+), Ca(2+), La(2+), Mg(2+) or Sr(2+). Uptake is an active process, which may involve TonB-dependent transporters, and as such does not involve porins. Cu-Mb can be taken up by other methanotrophic bacteria but not by E.coli. Has Cu-dependent superoxide dismutase-like activity. Shows reductant-dependent oxidase and hydrogen peroxide reductase activities. Reduces copper-levels in liver in a rat model of Wilson disease. This is Methanobactin mb-OB3b from Methylosinus trichosporium.